The chain runs to 309 residues: HPr kinase/phosphorylase (309 aa).

Active-site residues include histidine 138 and lysine 159. 153 to 160 (GQSGVGKS) is a binding site for ATP. Serine 160 lines the Mg(2+) pocket. The Proton acceptor; for phosphorylation activity. Proton donor; for dephosphorylation activity role is filled by aspartate 177. Positions 201 to 210 (LEIRGLGIIN) are important for the catalytic mechanism of both phosphorylation and dephosphorylation. Glutamate 202 provides a ligand contact to Mg(2+). Arginine 243 is an active-site residue. The tract at residues 264–269 (PVRPGR) is important for the catalytic mechanism of dephosphorylation.

This sequence belongs to the HPrK/P family. As to quaternary structure, homohexamer. The cofactor is Mg(2+).

It carries out the reaction [HPr protein]-L-serine + ATP = [HPr protein]-O-phospho-L-serine + ADP + H(+). It catalyses the reaction [HPr protein]-O-phospho-L-serine + phosphate + H(+) = [HPr protein]-L-serine + diphosphate. Functionally, catalyzes the ATP- as well as the pyrophosphate-dependent phosphorylation of a specific serine residue in HPr, a phosphocarrier protein of the phosphoenolpyruvate-dependent sugar phosphotransferase system (PTS). HprK/P also catalyzes the pyrophosphate-producing, inorganic phosphate-dependent dephosphorylation (phosphorolysis) of seryl-phosphorylated HPr (P-Ser-HPr). The two antagonistic activities of HprK/P are regulated by several intracellular metabolites, which change their concentration in response to the absence or presence of rapidly metabolisable carbon sources (glucose, fructose, etc.) in the growth medium. Also phosphorylates/dephosphorylates the HPr-like catabolite repression protein crh on a specific serine residue. Therefore, by controlling the phosphorylation state of HPr and crh, HPrK/P is a sensor enzyme that plays a major role in the regulation of carbon metabolism and sugar transport: it mediates carbon catabolite repression (CCR), and regulates PTS-catalyzed carbohydrate uptake and inducer exclusion. This Bacillus mycoides (strain KBAB4) (Bacillus weihenstephanensis) protein is HPr kinase/phosphorylase.